The sequence spans 203 residues: LexA repressor 2 (203 aa).

The H-T-H motif DNA-binding region spans 28-48; that stretch reads MREIARHLNVNGTLGVAKHLE. Catalysis depends on for autocatalytic cleavage activity residues Ser-122 and Lys-159.

This sequence belongs to the peptidase S24 family. As to quaternary structure, homodimer.

It carries out the reaction Hydrolysis of Ala-|-Gly bond in repressor LexA.. Functionally, represses a number of genes involved in the response to DNA damage (SOS response), including recA and lexA. In the presence of single-stranded DNA, RecA interacts with LexA causing an autocatalytic cleavage which disrupts the DNA-binding part of LexA, leading to derepression of the SOS regulon and eventually DNA repair. The protein is LexA repressor 2 of Geobacter sulfurreducens (strain ATCC 51573 / DSM 12127 / PCA).